Consider the following 161-residue polypeptide: Large ribosomal subunit protein uL10 (161 aa).

Belongs to the universal ribosomal protein uL10 family. Part of the ribosomal stalk of the 50S ribosomal subunit. The N-terminus interacts with L11 and the large rRNA to form the base of the stalk. The C-terminus forms an elongated spine to which L12 dimers bind in a sequential fashion forming a multimeric L10(L12)X complex.

Functionally, forms part of the ribosomal stalk, playing a central role in the interaction of the ribosome with GTP-bound translation factors. This is Large ribosomal subunit protein uL10 (rplJ) from Mycoplasma pneumoniae (strain ATCC 29342 / M129 / Subtype 1) (Mycoplasmoides pneumoniae).